The sequence spans 537 residues: GTPase LSG1-1 (537 aa).

The 205-residue stretch at 158–362 folds into the CP-type G domain; it reads WRQLWRVLER…LCDCPGLVFP (205 aa). Residues 176–180 carry the DARXP motif motif; sequence DARDP. Residues 206–209 form a G4 region; the sequence is NKAD. 206 to 209 is a binding site for GTP; that stretch reads NKAD. A G5 region spans residues 234 to 236; sequence SAK. The segment at 311 to 318 is G1; it reads GYPNVGKS. 314 to 319 is a binding site for GTP; sequence NVGKSS. The tract at residues 337-341 is G2; that stretch reads GKTKH. The tract at residues 355 to 358 is G3; that stretch reads DCPG. Position 358 (glycine 358) interacts with GTP. The tract at residues 484-508 is disordered; that stretch reads LGAETREGSQTEKKGEEAPSLGLDQ. Residues 487 to 500 show a composition bias toward basic and acidic residues; that stretch reads ETREGSQTEKKGEE.

The protein belongs to the TRAFAC class YlqF/YawG GTPase family. Ubiquitous, with the highest expression in stem and hypsophyll on day 66.

The protein resides in the cytoplasm. Functionally, GTPase that might be redundant with LSG1-2 for ribosome biogenesis. Binds to 23S rRNA. In Arabidopsis thaliana (Mouse-ear cress), this protein is GTPase LSG1-1.